Consider the following 99-residue polypeptide: Acylphosphatase (99 aa).

Residues I5–S97 enclose the Acylphosphatase-like domain. Active-site residues include R20 and N38.

The protein belongs to the acylphosphatase family.

It carries out the reaction an acyl phosphate + H2O = a carboxylate + phosphate + H(+). The protein is Acylphosphatase (acyP) of Rhodopseudomonas palustris (strain BisB5).